The chain runs to 217 residues: Pyridoxine/pyridoxamine 5'-phosphate oxidase (217 aa).

Substrate is bound by residues 13 to 16 (RREY) and Lys-71. FMN contacts are provided by residues 66 to 71 (RIVLLK), 81 to 82 (YT), Arg-87, Lys-88, and Gln-110. Positions 128, 132, and 136 each coordinate substrate. Residues 145–146 (QS) and Trp-190 each bind FMN. 196–198 (RLH) is a binding site for substrate. Arg-200 contacts FMN.

This sequence belongs to the pyridoxamine 5'-phosphate oxidase family. Homodimer. The cofactor is FMN.

It carries out the reaction pyridoxamine 5'-phosphate + O2 + H2O = pyridoxal 5'-phosphate + H2O2 + NH4(+). The catalysed reaction is pyridoxine 5'-phosphate + O2 = pyridoxal 5'-phosphate + H2O2. The protein operates within cofactor metabolism; pyridoxal 5'-phosphate salvage; pyridoxal 5'-phosphate from pyridoxamine 5'-phosphate: step 1/1. It participates in cofactor metabolism; pyridoxal 5'-phosphate salvage; pyridoxal 5'-phosphate from pyridoxine 5'-phosphate: step 1/1. Functionally, catalyzes the oxidation of either pyridoxine 5'-phosphate (PNP) or pyridoxamine 5'-phosphate (PMP) into pyridoxal 5'-phosphate (PLP). This is Pyridoxine/pyridoxamine 5'-phosphate oxidase from Yersinia enterocolitica serotype O:8 / biotype 1B (strain NCTC 13174 / 8081).